A 46-amino-acid chain; its full sequence is Pape peptide (46 aa).

Low complexity predominate over residues 1–10 (KQLLKEALAP). Residues 1–46 (KQLLKEALAPEPAPKPAPEPAPEPAPEPAPEAAPEPAAAAPEAAPE) form a disordered region. The span at 11 to 33 (EPAPKPAPEPAPEPAPEPAPEAA) shows a compositional bias: pro residues. PAPE repeat units lie at residues 16–19 (PAPE), 20–23 (PAPE), 24–27 (PAPE), and 28–31 (PAPE). Residues 34 to 46 (PEPAAAAPEAAPE) are compositionally biased toward low complexity.

In terms of tissue distribution, expressed by the venom gland.

It localises to the secreted. The chain is Pape peptide from Tityus stigmurus (Brazilian scorpion).